The chain runs to 111 residues: UPF0342 protein SAG1376 (111 aa).

The span at 52 to 63 (QEMMQSGQMPSQ) shows a compositional bias: polar residues. Residues 52–71 (QEMMQSGQMPSQEEQDEMSK) form a disordered region.

It belongs to the UPF0342 family.

This chain is UPF0342 protein SAG1376, found in Streptococcus agalactiae serotype V (strain ATCC BAA-611 / 2603 V/R).